The primary structure comprises 702 residues: Elongation factor G (702 aa).

The tr-type G domain maps to 8–290 (TRYRNIGISA…AVIEYLPAPT (283 aa)). GTP contacts are provided by residues 17–24 (AHIDAGKT), 88–92 (DTPGH), and 142–145 (NKMD).

Belongs to the TRAFAC class translation factor GTPase superfamily. Classic translation factor GTPase family. EF-G/EF-2 subfamily.

It is found in the cytoplasm. Its function is as follows. Catalyzes the GTP-dependent ribosomal translocation step during translation elongation. During this step, the ribosome changes from the pre-translocational (PRE) to the post-translocational (POST) state as the newly formed A-site-bound peptidyl-tRNA and P-site-bound deacylated tRNA move to the P and E sites, respectively. Catalyzes the coordinated movement of the two tRNA molecules, the mRNA and conformational changes in the ribosome. The protein is Elongation factor G of Erwinia tasmaniensis (strain DSM 17950 / CFBP 7177 / CIP 109463 / NCPPB 4357 / Et1/99).